Here is a 273-residue protein sequence, read N- to C-terminus: Neuferricin (273 aa).

The N-terminal stretch at 1 to 22 (MLGYLAAAALCLAAVLLMRLDH) is a signal peptide. The Cytochrome b5 heme-binding domain maps to 44–143 (GRLMSKEELS…QNYITIGKLT (100 aa)).

Belongs to the cytochrome b5 family. MAPR subfamily.

Its subcellular location is the secreted. In terms of biological role, heme-binding protein which promotes neuronal but not astrocyte differentiation. This is Neuferricin (cyb5d2) from Xenopus tropicalis (Western clawed frog).